Consider the following 160-residue polypeptide: Oocyte-secreted protein 4B (160 aa).

The signal sequence occupies residues methionine 1–cysteine 13.

It belongs to the PLAC1 family.

It localises to the secreted. This is Oocyte-secreted protein 4B from Homo sapiens (Human).